The sequence spans 333 residues: GTPase Obg (333 aa).

In terms of domain architecture, Obg spans 4–162 (GNFVDYVKIY…MDVILELKVL (159 aa)). The OBG-type G domain maps to 163 to 332 (ADVGLVGFPN…LKDKLWKMLN (170 aa)). Residues 169–176 (GFPNAGKS), 194–198 (FTTLK), 216–219 (DIPG), 283–286 (SKCD), and 313–315 (SSV) each bind GTP. Mg(2+) is bound by residues serine 176 and threonine 196.

It belongs to the TRAFAC class OBG-HflX-like GTPase superfamily. OBG GTPase family. In terms of assembly, monomer. It depends on Mg(2+) as a cofactor.

It localises to the cytoplasm. Functionally, an essential GTPase which binds GTP, GDP and possibly (p)ppGpp with moderate affinity, with high nucleotide exchange rates and a fairly low GTP hydrolysis rate. Plays a role in control of the cell cycle, stress response, ribosome biogenesis and in those bacteria that undergo differentiation, in morphogenesis control. The chain is GTPase Obg from Flavobacterium johnsoniae (strain ATCC 17061 / DSM 2064 / JCM 8514 / BCRC 14874 / CCUG 350202 / NBRC 14942 / NCIMB 11054 / UW101) (Cytophaga johnsonae).